The following is a 342-amino-acid chain: Tetraacyldisaccharide 4'-kinase (342 aa).

68–75 (TVGGTGKT) is an ATP binding site.

The protein belongs to the LpxK family.

The catalysed reaction is a lipid A disaccharide + ATP = a lipid IVA + ADP + H(+). It participates in glycolipid biosynthesis; lipid IV(A) biosynthesis; lipid IV(A) from (3R)-3-hydroxytetradecanoyl-[acyl-carrier-protein] and UDP-N-acetyl-alpha-D-glucosamine: step 6/6. In terms of biological role, transfers the gamma-phosphate of ATP to the 4'-position of a tetraacyldisaccharide 1-phosphate intermediate (termed DS-1-P) to form tetraacyldisaccharide 1,4'-bis-phosphate (lipid IVA). This is Tetraacyldisaccharide 4'-kinase from Burkholderia vietnamiensis (strain G4 / LMG 22486) (Burkholderia cepacia (strain R1808)).